The following is a 408-amino-acid chain: LL-diaminopimelate aminotransferase (408 aa).

Residues Tyr15 and Gly42 each contribute to the substrate site. Residues Tyr72, Ser108–Lys109, Tyr132, Asn187, Tyr218, and Ser246–Ser248 contribute to the pyridoxal 5'-phosphate site. Substrate-binding residues include Lys109, Tyr132, and Asn187. An N6-(pyridoxal phosphate)lysine modification is found at Lys249. Residues Arg257 and Asn291 each coordinate pyridoxal 5'-phosphate. Residues Asn291 and Arg387 each coordinate substrate.

The protein belongs to the class-I pyridoxal-phosphate-dependent aminotransferase family. LL-diaminopimelate aminotransferase subfamily. Homodimer. It depends on pyridoxal 5'-phosphate as a cofactor.

It carries out the reaction (2S,6S)-2,6-diaminopimelate + 2-oxoglutarate = (S)-2,3,4,5-tetrahydrodipicolinate + L-glutamate + H2O + H(+). It functions in the pathway amino-acid biosynthesis; L-lysine biosynthesis via DAP pathway; LL-2,6-diaminopimelate from (S)-tetrahydrodipicolinate (aminotransferase route): step 1/1. Involved in the synthesis of meso-diaminopimelate (m-DAP or DL-DAP), required for both lysine and peptidoglycan biosynthesis. Catalyzes the direct conversion of tetrahydrodipicolinate to LL-diaminopimelate. In Prochlorococcus marinus (strain NATL2A), this protein is LL-diaminopimelate aminotransferase.